We begin with the raw amino-acid sequence, 221 residues long: PKHD-type hydroxylase P9303_20491 (221 aa).

Residues 80–174 form the Fe2OG dioxygenase domain; sequence HIHGVMFSRS…RLVCVGWIQS (95 aa). His-98, Asp-100, and His-155 together coordinate Fe cation. Arg-165 lines the 2-oxoglutarate pocket.

It depends on Fe(2+) as a cofactor. Requires L-ascorbate as cofactor.

In Prochlorococcus marinus (strain MIT 9303), this protein is PKHD-type hydroxylase P9303_20491.